The primary structure comprises 82 residues: NADH-ubiquinone oxidoreductase 9.5 kDa subunit (82 aa).

A helical membrane pass occupies residues 25-43 (AYFYSCVIAGLGPVFLTVV).

This sequence belongs to the complex I NDUFA3 subunit family. In terms of assembly, complex I is composed of about 40 different subunits.

Its subcellular location is the mitochondrion inner membrane. Functionally, accessory subunit of the mitochondrial membrane respiratory chain NADH dehydrogenase (Complex I), that is believed not to be involved in catalysis. Complex I functions in the transfer of electrons from NADH to the respiratory chain. The immediate electron acceptor for the enzyme is believed to be ubiquinone. This subunit binds ubiquinone. In Neurospora crassa (strain ATCC 24698 / 74-OR23-1A / CBS 708.71 / DSM 1257 / FGSC 987), this protein is NADH-ubiquinone oxidoreductase 9.5 kDa subunit (nuo9.5).